The primary structure comprises 1288 residues: CLIP-associating protein 2 (1288 aa).

Positions 1–62 are disordered; sequence MALSLSQDRS…AAKSGASKEG (62 aa). Composition is skewed to low complexity over residues 19–32 and 40–62; these read GSRP…FKVP and ESAS…SKEG. The tract at residues 62-312 is TOG 1; the sequence is GAGAVDEEDF…RTLQSCLKSS (251 aa). HEAT repeat units follow at residues 174 to 209, 210 to 246, and 251 to 288; these read HGAE…IRHT, HVPR…EWQT, and RHAA…HFPG. Disordered stretches follow at residues 314–571 and 614–634; these read SVAS…SSRL and ANSD…NGSI. 2 stretches are compositionally biased toward low complexity: residues 317-337 and 347-358; these read SLPQ…RPLS and PAGSKSSGSPAS. Composition is skewed to polar residues over residues 406–421 and 468–478; these read KQTL…SQVD and TALSTLSTGAQ. The SXIP motif 1 signature appears at 490-493; that stretch reads SRIP. A compositionally biased stretch (polar residues) spans 496 to 518; it reads QGCSRDSSPTRLSVAPSNISHIY. The SXIP motif 2 signature appears at 527-530; sequence SRIP. The segment covering 616-630 has biased composition (low complexity); the sequence is SDASSACSERSYSSR. The segment at 638–889 is TOG 2; that stretch reads MRQTEDVAEV…TKLLQNHLRN (252 aa). 2 HEAT repeats span residues 718-755 and 780-817; these read RVFS…KMGA and LQFT…QMEP. The span at 891–900 shows a compositional bias: polar residues; the sequence is GNTAQASIGS. Disordered regions lie at residues 891–936 and 960–1047; these read GNTA…FDYD and SVRS…DSGV. The span at 912–931 shows a compositional bias: low complexity; the sequence is SWSSPLTSPTNTSQNTPSPS. Over residues 963–977 the composition is skewed to basic and acidic residues; sequence SQEDMTEPPRKREGD. Positions 1019–1030 are enriched in low complexity; that stretch reads SDSSFGSSSFNK. Residues 1036–1046 are compositionally biased toward acidic residues; it reads DQEESLTDDSG. HEAT repeat units follow at residues 1047–1086, 1091–1128, 1167–1204, and 1209–1246; these read VDQS…ETQL, EHFK…RQPW, ISPD…RLPK, and QMLP…VIGE.

Belongs to the CLASP family. As to quaternary structure, interacts with microtubules.

Its subcellular location is the cytoplasm. The protein resides in the cytoskeleton. It is found in the microtubule organizing center. The protein localises to the centrosome. It localises to the chromosome. Its subcellular location is the centromere. The protein resides in the kinetochore. It is found in the spindle. The protein localises to the golgi apparatus. It localises to the trans-Golgi network. Its subcellular location is the cell membrane. The protein resides in the cell projection. It is found in the ruffle membrane. In terms of biological role, microtubule plus-end tracking protein that promotes the stabilization of dynamic microtubules. Involved in the nucleation of noncentrosomal microtubules originating from the trans-Golgi network (TGN). Required for the polarization of the cytoplasmic microtubule arrays in migrating cells towards the leading edge of the cell. May act at the cell cortex to enhance the frequency of rescue of depolymerizing microtubules. This cortical microtubule stabilizing activity is regulated at least in part by phosphatidylinositol 3-kinase signaling. Also performs a similar stabilizing function at the kinetochore which is essential for the bipolar alignment of chromosomes on the mitotic spindle. In Danio rerio (Zebrafish), this protein is CLIP-associating protein 2 (clasp2).